A 125-amino-acid polypeptide reads, in one-letter code: MSNKVTVERAERKDGRLWLYADNVPVPLVHVTPKRHMLVDSDALAFVYILETDDRFLYVIIPKQWWPELKAAFAEGEPIWLESEGMALELEQFGEELAYLLENIRDNANYGETFEQAVQEVFFAE.

The protein belongs to the UPF0738 family.

This Geobacillus thermodenitrificans (strain NG80-2) protein is UPF0738 protein GTNG_0708.